Consider the following 145-residue polypeptide: Large ribosomal subunit protein uL15 (145 aa).

A disordered region spans residues 23-51 (IGSGWGKTGGRGHKGQKSRSGGKIRKSFE). A compositionally biased stretch (basic residues) spans 32–47 (GRGHKGQKSRSGGKIR).

Belongs to the universal ribosomal protein uL15 family. As to quaternary structure, part of the 50S ribosomal subunit.

Binds to the 23S rRNA. The sequence is that of Large ribosomal subunit protein uL15 from Buchnera aphidicola subsp. Cinara cedri (strain Cc).